Consider the following 206-residue polypeptide: Adenylyl-sulfate kinase (206 aa).

31–38 provides a ligand contact to ATP; the sequence is GLSASGKS. S105 (phosphoserine intermediate) is an active-site residue.

Belongs to the APS kinase family.

The enzyme catalyses adenosine 5'-phosphosulfate + ATP = 3'-phosphoadenylyl sulfate + ADP + H(+). It functions in the pathway sulfur metabolism; hydrogen sulfide biosynthesis; sulfite from sulfate: step 2/3. In terms of biological role, catalyzes the synthesis of activated sulfate. The polypeptide is Adenylyl-sulfate kinase (sD) (Emericella nidulans (strain FGSC A4 / ATCC 38163 / CBS 112.46 / NRRL 194 / M139) (Aspergillus nidulans)).